Consider the following 396-residue polypeptide: Phosphoglycerate kinase (396 aa).

Substrate contacts are provided by residues 21–23, arginine 36, 59–62, arginine 119, and arginine 156; these read DFN and HLGK. ATP is bound by residues lysine 206, glutamate 325, and 352–355; that span reads GGDS.

The protein belongs to the phosphoglycerate kinase family. In terms of assembly, monomer.

It is found in the cytoplasm. The enzyme catalyses (2R)-3-phosphoglycerate + ATP = (2R)-3-phospho-glyceroyl phosphate + ADP. It functions in the pathway carbohydrate degradation; glycolysis; pyruvate from D-glyceraldehyde 3-phosphate: step 2/5. This is Phosphoglycerate kinase from Staphylococcus carnosus (strain TM300).